Reading from the N-terminus, the 161-residue chain is 2-C-methyl-D-erythritol 2,4-cyclodiphosphate synthase (161 aa).

Asp9 and His11 together coordinate a divalent metal cation. 4-CDP-2-C-methyl-D-erythritol 2-phosphate is bound by residues 9-11 and 37-38; these read DFH and HS. A divalent metal cation is bound at residue His45. 4-CDP-2-C-methyl-D-erythritol 2-phosphate is bound by residues 59-61, 64-68, 135-138, and Arg145; these read DIG, FPDTD, and TTTE.

Belongs to the IspF family. In terms of assembly, homotrimer. The cofactor is a divalent metal cation.

It catalyses the reaction 4-CDP-2-C-methyl-D-erythritol 2-phosphate = 2-C-methyl-D-erythritol 2,4-cyclic diphosphate + CMP. Its pathway is isoprenoid biosynthesis; isopentenyl diphosphate biosynthesis via DXP pathway; isopentenyl diphosphate from 1-deoxy-D-xylulose 5-phosphate: step 4/6. Involved in the biosynthesis of isopentenyl diphosphate (IPP) and dimethylallyl diphosphate (DMAPP), two major building blocks of isoprenoid compounds. Catalyzes the conversion of 4-diphosphocytidyl-2-C-methyl-D-erythritol 2-phosphate (CDP-ME2P) to 2-C-methyl-D-erythritol 2,4-cyclodiphosphate (ME-CPP) with a corresponding release of cytidine 5-monophosphate (CMP). The protein is 2-C-methyl-D-erythritol 2,4-cyclodiphosphate synthase of Leptospira borgpetersenii serovar Hardjo-bovis (strain JB197).